Consider the following 31-residue polypeptide: Cytochrome b6-f complex subunit 6 (31 aa).

Residues 4 to 26 form a helical membrane-spanning segment; sequence ITSYFGFLLAASTITPALFIGLS.

It belongs to the PetL family. The 4 large subunits of the cytochrome b6-f complex are cytochrome b6, subunit IV (17 kDa polypeptide, PetD), cytochrome f and the Rieske protein, while the 4 small subunits are PetG, PetL, PetM and PetN. The complex functions as a dimer.

It localises to the plastid. The protein resides in the chloroplast thylakoid membrane. Component of the cytochrome b6-f complex, which mediates electron transfer between photosystem II (PSII) and photosystem I (PSI), cyclic electron flow around PSI, and state transitions. PetL is important for photoautotrophic growth as well as for electron transfer efficiency and stability of the cytochrome b6-f complex. This chain is Cytochrome b6-f complex subunit 6, found in Buxus microphylla (Littleleaf boxwood).